Reading from the N-terminus, the 477-residue chain is Ribulose bisphosphate carboxylase large chain (477 aa).

Residues 1-2 constitute a propeptide that is removed on maturation; that stretch reads MS. Pro3 carries the post-translational modification N-acetylproline. N6,N6,N6-trimethyllysine is present on Lys14. Positions 123 and 173 each coordinate substrate. The active-site Proton acceptor is Lys175. A substrate-binding site is contributed by Lys177. Residues Lys201, Asp203, and Glu204 each coordinate Mg(2+). An N6-carboxylysine modification is found at Lys201. The Proton acceptor role is filled by His294. Substrate contacts are provided by Arg295, His327, and Ser379.

The protein belongs to the RuBisCO large chain family. Type I subfamily. Heterohexadecamer of 8 large chains and 8 small chains; disulfide-linked. The disulfide link is formed within the large subunit homodimers. The cofactor is Mg(2+). Post-translationally, the disulfide bond which can form in the large chain dimeric partners within the hexadecamer appears to be associated with oxidative stress and protein turnover.

The protein localises to the plastid. The protein resides in the chloroplast. It carries out the reaction 2 (2R)-3-phosphoglycerate + 2 H(+) = D-ribulose 1,5-bisphosphate + CO2 + H2O. The catalysed reaction is D-ribulose 1,5-bisphosphate + O2 = 2-phosphoglycolate + (2R)-3-phosphoglycerate + 2 H(+). Functionally, ruBisCO catalyzes two reactions: the carboxylation of D-ribulose 1,5-bisphosphate, the primary event in carbon dioxide fixation, as well as the oxidative fragmentation of the pentose substrate in the photorespiration process. Both reactions occur simultaneously and in competition at the same active site. This chain is Ribulose bisphosphate carboxylase large chain, found in Nicotiana tomentosiformis (Tobacco).